The primary structure comprises 4518 residues: Dynein axonemal heavy chain 11 (4518 aa).

The interval 1–1857 (MAASVAAQEA…LVHICDAQFQ (1857 aa)) is stem. 4 AAA regions span residues 1858–2079 (YFYE…VLVV), 2139–2368 (QMVR…TSFK), 2474–2721 (TMDP…VFQG), and 2819–3068 (NYND…EGRH). ATP-binding positions include 1896–1903 (GPAGTGKT), 2177–2184 (GNAGTGKS), 2512–2519 (GNAGVGKT), and 2857–2864 (GVGGSGKQ). Residues 3074–3405 (KSFLEQISLF…GQSIKSFEAQ (332 aa)) form a stalk region. The stretch at 3322 to 3391 (LAQANLELAT…NRLVKELEVK (70 aa)) forms a coiled coil. 2 AAA regions span residues 3461–3688 (LTDD…EIER) and 3898–4124 (LRNF…VLYN).

The protein belongs to the dynein heavy chain family. As to quaternary structure, consists of at least two heavy chains and a number of intermediate and light chains. Interacts with CFAP45.

Its subcellular location is the cytoplasm. It is found in the cytoskeleton. The protein resides in the cilium axoneme. Its function is as follows. Force generating protein of respiratory cilia. Produces force towards the minus ends of microtubules. Dynein has ATPase activity; the force-producing power stroke is thought to occur on release of ADP. The polypeptide is Dynein axonemal heavy chain 11 (DNAH11) (Sus scrofa (Pig)).